A 700-amino-acid chain; its full sequence is Protein no-on-transient A (700 aa).

The segment at 1–270 (MESAGKQDNN…GGGGPRGGED (270 aa)) is disordered. 2 stretches are compositionally biased toward low complexity: residues 9-29 (NNAT…ANKN) and 54-69 (GGPN…NQNG). Residues 70–79 (GVTGGGGAVG) show a composition bias toward gly residues. Composition is skewed to low complexity over residues 80 to 89 (GPNQNKNFGN), 96 to 124 (GNRN…KPNN), and 144 to 175 (AAAG…VHGQ). Positions 176-208 (GNQGGPGNQGGAGNQGGQGNQGGAGNQGNGQGF) are enriched in gly residues. The residue at position 236 (S236) is a Phosphoserine. Residues 253-266 (MGGGGGGGGGGGPR) are compositionally biased toward gly residues. RRM domains follow at residues 302 to 374 (NRLY…FAPN) and 376 to 457 (TILR…PMEV). A coiled-coil region spans residues 505-616 (NLFKTKQDAL…AQQLNSLLDQ (112 aa)). The span at 568–582 (EMRKREEETMRRHQT) shows a compositional bias: basic and acidic residues. Disordered regions lie at residues 568-591 (EMRK…MNRQ) and 677-700 (MNQG…RRRF). Residues 682-691 (NQRGNNGGGN) are compositionally biased toward gly residues.

Functionally, required for normal vision and courtship behavior in Drosophila. This Drosophila melanogaster (Fruit fly) protein is Protein no-on-transient A (nonA).